A 499-amino-acid chain; its full sequence is Glutamyl-tRNA(Gln) amidotransferase subunit A (499 aa).

Catalysis depends on charge relay system residues lysine 76 and serine 151. The active-site Acyl-ester intermediate is serine 175.

The protein belongs to the amidase family. GatA subfamily. In terms of assembly, heterotrimer of A, B and C subunits.

The catalysed reaction is L-glutamyl-tRNA(Gln) + L-glutamine + ATP + H2O = L-glutaminyl-tRNA(Gln) + L-glutamate + ADP + phosphate + H(+). Allows the formation of correctly charged Gln-tRNA(Gln) through the transamidation of misacylated Glu-tRNA(Gln) in organisms which lack glutaminyl-tRNA synthetase. The reaction takes place in the presence of glutamine and ATP through an activated gamma-phospho-Glu-tRNA(Gln). The chain is Glutamyl-tRNA(Gln) amidotransferase subunit A from Rhodopirellula baltica (strain DSM 10527 / NCIMB 13988 / SH1).